The following is a 536-amino-acid chain: Lysosomal acid glucosylceramidase (536 aa).

The signal sequence occupies residues 1 to 39 (MELSSPSREEYPMPRGRVGIMAASLMGLLLLHTVSWVSG). Intrachain disulfides connect cysteine 43–cysteine 55 and cysteine 57–cysteine 62. 4 N-linked (GlcNAc...) asparagine glycosylation sites follow: asparagine 58, asparagine 98, asparagine 185, and asparagine 208. Catalysis depends on glutamate 274, which acts as the Proton donor. Asparagine 309 is a glycosylation site (N-linked (GlcNAc...) asparagine). The active-site Nucleophile is glutamate 379. Asparagine 501 carries an N-linked (GlcNAc...) asparagine glycan.

This sequence belongs to the glycosyl hydrolase 30 family. As to quaternary structure, interacts with saposin-C. Interacts with SCARB2. Interacts with TCP1. Interacts with GRN; this interaction prevents aggregation of GBA1-SCARB2 complex via interaction with HSPA1A upon stress.

Its subcellular location is the lysosome membrane. The enzyme catalyses a beta-D-glucosyl-(1&lt;-&gt;1')-N-acylsphing-4-enine + H2O = an N-acylsphing-4-enine + D-glucose. The catalysed reaction is a beta-D-galactosyl-(1&lt;-&gt;1')-N-acylsphing-4-enine + H2O = an N-acylsphing-4-enine + D-galactose. It carries out the reaction cholesteryl 3-beta-D-glucoside + H2O = cholesterol + D-glucose. It catalyses the reaction a beta-D-glucosyl-(1&lt;-&gt;1')-N-acylsphing-4-enine + cholesterol = cholesteryl 3-beta-D-glucoside + an N-acylsphing-4-enine. The enzyme catalyses beta-D-glucosyl-N-(9Z-octadecenoyl)-sphing-4E-enine + cholesterol = N-(9Z-octadecenoyl)-sphing-4-enine + cholesteryl 3-beta-D-glucoside. The catalysed reaction is beta-D-glucosyl-N-octanoylsphing-4E-enine + cholesterol = N-octanoylsphing-4-enine + cholesteryl 3-beta-D-glucoside. It carries out the reaction beta-D-glucosyl-N-dodecanoylsphing-4-enine + cholesterol = N-dodecanoylsphing-4-enine + cholesteryl 3-beta-D-glucoside. It catalyses the reaction beta-D-glucosyl-(1&lt;-&gt;1)-N-octadecanoylsphing-4-enine + cholesterol = N-octadecanoylsphing-4-enine + cholesteryl 3-beta-D-glucoside. The enzyme catalyses beta-D-glucosyl-(1&lt;-&gt;1')-N-(15Z-tetracosenoyl)-sphing-4-enine + cholesterol = N-(15Z-tetracosenoyl)-sphing-4-enine + cholesteryl 3-beta-D-glucoside. The catalysed reaction is a beta-D-galactosyl-(1&lt;-&gt;1')-N-acylsphing-4-enine + cholesterol = cholesteryl 3-beta-D-galactoside + an N-acylsphing-4-enine. It carries out the reaction 1-(beta-D-galactosyl)-N-dodecanoylsphing-4-enine + cholesterol = cholesteryl 3-beta-D-galactoside + N-dodecanoylsphing-4-enine. It catalyses the reaction a beta-D-xylosyl-(1&lt;-&gt;1')-N-acylsphing-4-enine + cholesterol = cholesteryl 3-beta-D-xyloside + an N-acylsphing-4-enine. The enzyme catalyses beta-D-xylosyl-(1&lt;-&gt;1')-N-(9Z-octadecenoyl)-sphing-4-enine + cholesterol = cholesteryl 3-beta-D-xyloside + N-(9Z-octadecenoyl)-sphing-4-enine. Its pathway is steroid metabolism; cholesterol metabolism. The protein operates within sphingolipid metabolism. Glucosylceramidase that catalyzes, within the lysosomal compartment, the hydrolysis of glucosylceramides/GlcCers (such as beta-D-glucosyl-(1&lt;-&gt;1')-N-acylsphing-4-enine) into free ceramides (such as N-acylsphing-4-enine) and glucose. Plays a central role in the degradation of complex lipids and the turnover of cellular membranes. Through the production of ceramides, participates in the PKC-activated salvage pathway of ceramide formation. Catalyzes the glucosylation of cholesterol, through a transglucosylation reaction where glucose is transferred from GlcCer to cholesterol. GlcCer containing mono-unsaturated fatty acids (such as beta-D-glucosyl-N-(9Z-octadecenoyl)-sphing-4-enine) are preferred as glucose donors for cholesterol glucosylation when compared with GlcCer containing same chain length of saturated fatty acids (such as beta-D-glucosyl-N-octadecanoyl-sphing-4-enine). Under specific conditions, may alternatively catalyze the reverse reaction, transferring glucose from cholesteryl 3-beta-D-glucoside to ceramide. Can also hydrolyze cholesteryl 3-beta-D-glucoside producing glucose and cholesterol. Catalyzes the hydrolysis of galactosylceramides/GalCers (such as beta-D-galactosyl-(1&lt;-&gt;1')-N-acylsphing-4-enine), as well as the transfer of galactose between GalCers and cholesterol in vitro, but with lower activity than with GlcCers. Contrary to GlcCer and GalCer, xylosylceramide/XylCer (such as beta-D-xyosyl-(1&lt;-&gt;1')-N-acylsphing-4-enine) is not a good substrate for hydrolysis, however it is a good xylose donor for transxylosylation activity to form cholesteryl 3-beta-D-xyloside. This is Lysosomal acid glucosylceramidase (GBA1) from Bos taurus (Bovine).